The primary structure comprises 123 residues: uncharacterized protein (123 aa).

Thr-56 is modified (phosphothreonine). Ser-73, Ser-87, Ser-97, Ser-113, and Ser-119 each carry phosphoserine.

As to expression, highly expressed in the kidney (at protein level).

The protein localises to the cytoplasm. This is an uncharacterized protein from Felis catus (Cat).